The following is a 71-amino-acid chain: Potassium voltage-gated channel subfamily E member 2 (71 aa).

A helical membrane pass occupies residues 7 to 27 (VILYLMVMIGMFSFIIVAILV). The Cytoplasmic portion of the chain corresponds to 28 to 71 (STVKSKRREHSNDPYHQYIVEDWQEKYKSQILHFEEAKATIHEN).

Belongs to the potassium channel KCNE family. As to quaternary structure, interacts with KCNB1. Associates with KCNH2/ERG1. May associate with KCNQ2 and KCNQ3. Associates with HCN1 and probably HCN2. Heteromultimer with KCNC2. Interacts with KCNC2. Interacts with KCNQ1; forms a heterooligomer complex that targets to the membrane raft and leading to currents with an apparently instantaneous activation, a rapid deactivation process and a linear current-voltage relationship and decreases the amplitude of the outward current. Detected in heart; expression is highest in the SA node and the right atrium, and barely detectable in the ventricle.

It is found in the cell membrane. It localises to the apical cell membrane. Its function is as follows. Ancillary protein that functions as a regulatory subunit of the voltage-gated potassium (Kv) channel complex composed of pore-forming and potassium-conducting alpha subunits and of regulatory beta subunits. KCNE2 beta subunit modulates the gating kinetics and enhances stability of the channel complex. Alters the gating of the delayed rectifier Kv channel containing KCNB1 alpha subunit. Associates with KCNH2/HERG alpha subunit Kv channel to form the rapidly activating component of the delayed rectifying potassium current (IKr) in heart. May associate with KCNQ2 and/or KCNQ3 alpha subunits to modulate the native M-type current. May associate with HCN1 and HCN2 channel subunits to increase potassium current. Forms a heterooligomer complex with KCNQ1/KVLQT1 alpha subunits which leads to currents with an apparently instantaneous activation, a rapid deactivation process and a linear current-voltage relationship and decreases the amplitude of the outward current. KCNQ1-KCNE2 channel associates with Na(+)-coupled myo-inositol symporter in the apical membrane of choroid plexus epithelium and regulates the myo-inositol gradient between blood and cerebrospinal fluid with an impact on neuron excitability. The sequence is that of Potassium voltage-gated channel subfamily E member 2 (KCNE2) from Oryctolagus cuniculus (Rabbit).